The primary structure comprises 243 residues: Cytochrome c oxidase subunit 2 (243 aa).

Over 1–34 the chain is Mitochondrial intermembrane; the sequence is MNNIIHNDAPTPWGIYFQDGASPVYDGIVELHDQ. A helical transmembrane segment spans residues 35–55; that stretch reads VLFYLLIVLVGVSWILFSTIL. Residues 56–74 are Mitochondrial matrix-facing; that stretch reads RFRGSGIVHKYHNHSTTIE. A helical transmembrane segment spans residues 75-97; that stretch reads FVWTVSPALLLIAIAFPSFKLLY. Residues 98–243 lie on the Mitochondrial intermembrane side of the membrane; the sequence is LMDEVIDPSI…EKFLSWLDNQ (146 aa). Cu cation is bound by residues His178, Cys213, Glu215, Cys217, His221, and Met224. Glu215 serves as a coordination point for Mg(2+).

Belongs to the cytochrome c oxidase subunit 2 family. In terms of assembly, component of the cytochrome c oxidase (complex IV, CIV), a multisubunit enzyme composed of a catalytic core of 3 subunits and several supernumerary subunits. The complex exists as a monomer or a dimer and forms supercomplexes (SCs) in the inner mitochondrial membrane with ubiquinol-cytochrome c oxidoreductase (cytochrome b-c1 complex, complex III, CIII). It depends on Cu cation as a cofactor.

It localises to the mitochondrion inner membrane. The enzyme catalyses 4 Fe(II)-[cytochrome c] + O2 + 8 H(+)(in) = 4 Fe(III)-[cytochrome c] + 2 H2O + 4 H(+)(out). Its function is as follows. Component of the cytochrome c oxidase, the last enzyme in the mitochondrial electron transport chain which drives oxidative phosphorylation. The respiratory chain contains 3 multisubunit complexes succinate dehydrogenase (complex II, CII), ubiquinol-cytochrome c oxidoreductase (cytochrome b-c1 complex, complex III, CIII) and cytochrome c oxidase (complex IV, CIV), that cooperate to transfer electrons derived from NADH and succinate to molecular oxygen, creating an electrochemical gradient over the inner membrane that drives transmembrane transport and the ATP synthase. Cytochrome c oxidase is the component of the respiratory chain that catalyzes the reduction of oxygen to water. Electrons originating from reduced cytochrome c in the intermembrane space (IMS) are transferred via the dinuclear copper A center (CU(A)) of subunit 2 and heme A of subunit 1 to the active site in subunit 1, a binuclear center (BNC) formed by heme A3 and copper B (CU(B)). The BNC reduces molecular oxygen to 2 water molecules using 4 electrons from cytochrome c in the IMS and 4 protons from the mitochondrial matrix. The sequence is that of Cytochrome c oxidase subunit 2 from Pneumocystis carinii.